We begin with the raw amino-acid sequence, 989 residues long: DEAD-box ATP-dependent RNA helicase 45 (989 aa).

Basic and acidic residues-rich tracts occupy residues 1 to 39 (MLEKSKSRKENDRKDRDRSKKENGRRDTTEMRSRVKRCD) and 64 to 101 (RDSKRRGEDKGRGRRERDRDRGKYLKRDRERREREKEK). 2 disordered regions span residues 1 to 248 (MLEK…AADE) and 305 to 330 (QGEDSDSDYSEPKSDDDPSLDEDDEE). Residues 88–182 (LKRDRERRER…ELKRQNEEAQ (95 aa)) are a coiled coil. At Ser-119 the chain carries Phosphoserine. The segment covering 134–179 (SRHGDDDVEKKTRDEQVEDEQKQLAEEVEKRRRRVQEWQELKRQNE) has biased composition (basic and acidic residues). At Ser-200 the chain carries Phosphoserine. Residues 203–222 (EVKSDSEMDVDRDTKLENGG) are compositionally biased toward basic and acidic residues. A compositionally biased stretch (polar residues) spans 230-239 (ENETAVTVSE). Over residues 321–330 (DPSLDEDDEE) the composition is skewed to acidic residues. The Q motif signature appears at 396–424 (QFWHQTGLTSKILDTLKKLNYEKPMPIQA). The Helicase ATP-binding domain maps to 427–605 (LPIIMSGRDC…RKVLNKPVEI (179 aa)). 440-447 (AKTGSGKT) contributes to the ATP binding site. The DEAD box motif lies at 553 to 556 (DEAD). A Helicase C-terminal domain is found at 590-748 (QVETLARKVL…PVPDDVKAVA (159 aa)).

This sequence belongs to the DEAD box helicase family. DDX46/PRP5 subfamily.

The enzyme catalyses ATP + H2O = ADP + phosphate + H(+). This chain is DEAD-box ATP-dependent RNA helicase 45 (RH45), found in Arabidopsis thaliana (Mouse-ear cress).